The primary structure comprises 585 residues: A-type ATP synthase subunit A (585 aa).

ATP is bound at residue 231 to 238 (GPFGSGKT).

This sequence belongs to the ATPase alpha/beta chains family. As to quaternary structure, has multiple subunits with at least A(3), B(3), C, D, E, F, H, I and proteolipid K(x).

The protein localises to the cell membrane. The enzyme catalyses ATP + H2O + 4 H(+)(in) = ADP + phosphate + 5 H(+)(out). Functionally, produces ATP from ADP in the presence of a proton gradient across the membrane. The archaeal alpha chain is a catalytic subunit. Component of the A-type ATP synthase that produces ATP from ADP in the presence of a proton gradient across the membrane. The A chain is the catalytic subunit. The chain is A-type ATP synthase subunit A from Thermococcus kodakarensis (strain ATCC BAA-918 / JCM 12380 / KOD1) (Pyrococcus kodakaraensis (strain KOD1)).